The chain runs to 173 residues: Alpha-crystallin A chain (173 aa).

The residue at position 1 (Met1) is an N-acetylmethionine. The segment at 1–63 is required for complex formation with BFSP1 and BFSP2; the sequence is MDVTIQHPWF…RTVLDSGISE (63 aa). Deamidated glutamine; partial is present on Gln6. Position 45 is a phosphoserine (Ser45). Deamidated glutamine; partial occurs at positions 50 and 90. A sHSP domain is found at 52–162; sequence LFRTVLDSGI…SHSERAIPVS (111 aa). Lys99 bears the N6-acetyllysine mark. His100 is a binding site for Zn(2+). Asn101 is modified (deamidated asparagine; partial). Residues Glu102 and His107 each coordinate Zn(2+). Position 122 is a phosphoserine (Ser122). Position 123 is a deamidated asparagine; partial (Asn123). The cysteines at positions 131 and 142 are disulfide-linked. A Deamidated glutamine; partial modification is found at Gln147. The interval 149–173 is disordered; it reads GMDASHSERAIPVSREEKPSSAPSS. Positions 153–167 are enriched in basic and acidic residues; it reads SHSERAIPVSREEKP. Residue His154 participates in Zn(2+) binding. Ser162 carries an O-linked (GlcNAc) serine glycan.

The protein belongs to the small heat shock protein (HSP20) family. As to quaternary structure, heteromer composed of three CRYAA and one CRYAB subunits. Inter-subunit bridging via zinc ions enhances stability, which is crucial as there is no protein turn over in the lens. Can also form homodimers and homotetramers (dimers of dimers) which serve as the building blocks of homooligomers. Within homooligomers, the zinc-binding motif is created from residues of 3 different molecules. His-100 and Glu-102 from one molecule are ligands of the zinc ion, and His-107 and His-154 residues from additional molecules complete the site with tetrahedral coordination geometry. Part of a complex required for lens intermediate filament formation composed of BFSP1, BFSP2 and CRYAA. Undergoes age-dependent proteolytical cleavage at the C-terminus.

The protein localises to the cytoplasm. The protein resides in the nucleus. Contributes to the transparency and refractive index of the lens. In its oxidized form (absence of intramolecular disulfide bond), acts as a chaperone, preventing aggregation of various proteins under a wide range of stress conditions. Required for the correct formation of lens intermediate filaments as part of a complex composed of BFSP1, BFSP2 and CRYAA. The protein is Alpha-crystallin A chain (CRYAA) of Loxodonta africana (African elephant).